The primary structure comprises 149 residues: D-aminoacyl-tRNA deacylase (149 aa).

The short motif at 137–138 (GP) is the Gly-cisPro motif, important for rejection of L-amino acids element.

It belongs to the DTD family. As to quaternary structure, homodimer.

The protein localises to the cytoplasm. The catalysed reaction is glycyl-tRNA(Ala) + H2O = tRNA(Ala) + glycine + H(+). The enzyme catalyses a D-aminoacyl-tRNA + H2O = a tRNA + a D-alpha-amino acid + H(+). An aminoacyl-tRNA editing enzyme that deacylates mischarged D-aminoacyl-tRNAs. Also deacylates mischarged glycyl-tRNA(Ala), protecting cells against glycine mischarging by AlaRS. Acts via tRNA-based rather than protein-based catalysis; rejects L-amino acids rather than detecting D-amino acids in the active site. By recycling D-aminoacyl-tRNA to D-amino acids and free tRNA molecules, this enzyme counteracts the toxicity associated with the formation of D-aminoacyl-tRNA entities in vivo and helps enforce protein L-homochirality. This is D-aminoacyl-tRNA deacylase from Fervidobacterium nodosum (strain ATCC 35602 / DSM 5306 / Rt17-B1).